Reading from the N-terminus, the 199-residue chain is Urease accessory protein UreG (199 aa).

8–15 is a binding site for GTP; sequence GPVGSGKT.

Belongs to the SIMIBI class G3E GTPase family. UreG subfamily. Homodimer. UreH, UreF and UreG form a complex that acts as a GTP-hydrolysis-dependent molecular chaperone, activating the urease apoprotein by helping to assemble the nickel containing metallocenter of UreC. The UreE protein probably delivers the nickel.

The protein localises to the cytoplasm. In terms of biological role, facilitates the functional incorporation of the urease nickel metallocenter. This process requires GTP hydrolysis, probably effectuated by UreG. The chain is Urease accessory protein UreG from Helicobacter pylori (strain J99 / ATCC 700824) (Campylobacter pylori J99).